The chain runs to 178 residues: Caveolin-1 (178 aa).

Residue serine 2 is modified to N-acetylserine. Serine 2 is modified (phosphoserine). Positions 2-94 (SGGKYVDSEG…WKASFTTFTV (93 aa)) are required for homooligomerization. The Cytoplasmic portion of the chain corresponds to 2-104 (SGGKYVDSEG…TKYWFYRLLS (103 aa)). Lysine 5 bears the N6-acetyllysine; alternate mark. A Glycyl lysine isopeptide (Lys-Gly) (interchain with G-Cter in ubiquitin); alternate cross-link involves residue lysine 5. Tyrosine 6 bears the Phosphotyrosine mark. The residue at position 9 (serine 9) is a Phosphoserine. Tyrosine 14 is subject to Phosphotyrosine; by ABL1. Tyrosine 25 is subject to Phosphotyrosine. Residues lysine 26 and lysine 30 each participate in a glycyl lysine isopeptide (Lys-Gly) (interchain with G-Cter in ubiquitin) cross-link. Serine 37 is modified (phosphoserine). Residues lysine 39, lysine 47, and lysine 57 each participate in a glycyl lysine isopeptide (Lys-Gly) (interchain with G-Cter in ubiquitin) cross-link. The interval 82–94 (DGIWKASFTTFTV) is interaction with CAVIN3. The helical intramembrane region spans 105–125 (ALFGIPMALIWGIYFAILSFL). Residues 126 to 178 (HIWAVVPCIKSFLIEIQCISRVYSIYVHTVCDPLFEAVGKIFSNVRINLQKEI) are Cytoplasmic-facing. The interval 131 to 142 (VPCIKSFLIEIQ) is interacts with SPRY1, SPRY2, SPRY3 and SPRY4. Residues cysteine 133, cysteine 143, and cysteine 156 are each lipidated (S-palmitoyl cysteine). An interacts with SPRY1, SPRY2, and SPRY4 region spans residues 149-160 (SIYVHTVCDPLF). Residues 167 to 178 (FSNVRINLQKEI) are interacts with SPRY1, SPRY2, SPRY3 and SPRY4.

The protein belongs to the caveolin family. As to quaternary structure, homooligomer. Interacts with GLIPR2. Interacts with NOSTRIN. Interacts with SNAP25 and STX1A. Interacts (via the N-terminus) with DPP4; the interaction is direct. Interacts with CTNNB1, CDH1 and JUP. Interacts with PACSIN2; this interaction induces membrane tubulation. Interacts with SLC7A9. Interacts with BMX and BTK. Interacts with TGFBR1. Interacts with CAVIN3 (via leucine-zipper domain) in a cholesterol-sensitive manner. Interacts with CAVIN1. Interacts with EHD2 in a cholesterol-dependent manner. Forms a ternary complex with UBXN6 and VCP; mediates CAV1 targeting to lysosomes for degradation. Interacts with ABCG1; this interaction regulates ABCG1-mediated cholesterol efflux. Interacts with NEU3; this interaction enhances NEU3 sialidase activity within caveola. Interacts (via C-terminus) with SPRY1, SPRY2 (via C-terminus), SPRY3, and SPRY4. Interacts with IGFBP5; this interaction allows trafficking of IGFBP5 from the plasma membrane to the nucleus. In terms of processing, phosphorylated at Tyr-14 by ABL1 in response to oxidative stress. Post-translationally, ubiquitinated. Undergo monoubiquitination and multi- and/or polyubiquitination. Monoubiquitination of N-terminal lysines promotes integration in a ternary complex with UBXN6 and VCP which promotes oligomeric CAV1 targeting to lysosomes for degradation. Ubiquitinated by ZNRF1; leading to degradation and modulation of the TLR4-mediated immune response.

It is found in the golgi apparatus membrane. The protein resides in the cell membrane. Its subcellular location is the membrane. It localises to the caveola. The protein localises to the membrane raft. Its function is as follows. May act as a scaffolding protein within caveolar membranes. Forms a stable heterooligomeric complex with CAV2 that targets to lipid rafts and drives caveolae formation. Mediates the recruitment of CAVIN proteins (CAVIN1/2/3/4) to the caveolae. Interacts directly with G-protein alpha subunits and can functionally regulate their activity. Involved in the costimulatory signal essential for T-cell receptor (TCR)-mediated T-cell activation. Its binding to DPP4 induces T-cell proliferation and NF-kappa-B activation in a T-cell receptor/CD3-dependent manner. Recruits CTNNB1 to caveolar membranes and may regulate CTNNB1-mediated signaling through the Wnt pathway. Negatively regulates TGFB1-mediated activation of SMAD2/3 by mediating the internalization of TGFBR1 from membrane rafts leading to its subsequent degradation. Binds 20(S)-hydroxycholesterol (20(S)-OHC). This is Caveolin-1 (CAV1) from Pongo abelii (Sumatran orangutan).